The following is an 802-amino-acid chain: Copper-exporting P-type ATPase (802 aa).

HMA domains are found at residues 5 to 70 and 72 to 138; these read KKTT…YGVT and ETVE…YDAS. Cu(+) contacts are provided by C16, C19, C83, and C86. The next 6 helical transmembrane spans lie at 161–181, 192–212, 224–244, 256–276, 411–431, and 438–458; these read LIIS…HLFN, WFQF…FYVG, MDVL…YEMV, LYFE…YLEA, YFVP…ITLV, and PALV…LGLA. Catalysis depends on D495, which acts as the 4-aspartylphosphate intermediate. Mg(2+) is bound by residues D690 and D694. A run of 2 helical transmembrane segments spans residues 748–767 and 771–790; these read LFWA…LGLL and VAGA…ALRL.

It belongs to the cation transport ATPase (P-type) (TC 3.A.3) family. Type IB subfamily.

The protein localises to the cell membrane. The enzyme catalyses Cu(+)(in) + ATP + H2O = Cu(+)(out) + ADP + phosphate + H(+). Involved in copper export. The protein is Copper-exporting P-type ATPase (copA) of Staphylococcus aureus (strain N315).